We begin with the raw amino-acid sequence, 258 residues long: Type III pantothenate kinase (258 aa).

7–14 (DVGNTRLK) contributes to the ATP binding site. Substrate is bound by residues Tyr96 and 103 to 106 (GADR). Residue Asp105 is the Proton acceptor of the active site. Residue Thr133 participates in ATP binding. Thr183 contributes to the substrate binding site.

It belongs to the type III pantothenate kinase family. As to quaternary structure, homodimer. NH4(+) serves as cofactor. The cofactor is K(+).

It is found in the cytoplasm. The catalysed reaction is (R)-pantothenate + ATP = (R)-4'-phosphopantothenate + ADP + H(+). It participates in cofactor biosynthesis; coenzyme A biosynthesis; CoA from (R)-pantothenate: step 1/5. Functionally, catalyzes the phosphorylation of pantothenate (Pan), the first step in CoA biosynthesis. The sequence is that of Type III pantothenate kinase from Acidovorax ebreus (strain TPSY) (Diaphorobacter sp. (strain TPSY)).